The chain runs to 560 residues: Protein GAT2 (560 aa).

Disordered regions lie at residues 274–297, 345–383, and 412–461; these read RQQEQQQLKQQESEKESSSPFSNK, FLSTSSSSPSPTAGSAPLQKLQVPRQDDPNDKKMNISSS, and LNTK…SDEK. The span at 347–361 shows a compositional bias: low complexity; the sequence is STSSSSPSPTAGSAP. Residues 369–378 are compositionally biased toward basic and acidic residues; the sequence is RQDDPNDKKM. Over residues 414 to 425 the composition is skewed to basic residues; the sequence is TKKKNNRGRPRA. Polar residues predominate over residues 428-456; that stretch reads RQPTLTTSSHFINNSNPGAAAVSTTTPAA. Residues 472-497 form a GATA-type zinc finger; that stretch reads CFHCGETETPEWRKGPYGTRTLCNAC.

This is Protein GAT2 (GAT2) from Saccharomyces cerevisiae (strain ATCC 204508 / S288c) (Baker's yeast).